The primary structure comprises 2541 residues: Talin-1 (2541 aa).

The 318-residue stretch at 86 to 403 folds into the FERM domain; that stretch reads RPLKIRMLDG…GYIDIILKKK (318 aa). Phosphothreonine is present on Thr167. The tract at residues 280–435 is interaction with LAYN; the sequence is FQAHKNCGQM…PKKSTVLQQQ (156 aa). Residues Ser405, Ser425, Ser446, Ser620, and Ser729 each carry the phosphoserine modification. Residues 482-655 are helical bundle R1; it reads RGHMPPLTSA…QASGELLQQI (174 aa). Residues 656 to 786 are helical bundle R2; the sequence is GESDTDPHFQ…ALNELLQHVK (131 aa). The segment at 787–911 is helical bundle R3; it reads AHATGAGPAG…NAAAQNAIKK (125 aa). Positions 913–1044 are helical bundle R4; that stretch reads LVQRLEHAAK…RTAAQKAQEA (132 aa). Ser1021 is subject to Phosphoserine. The tract at residues 1046–1206 is helical bundle R5; the sequence is GPLEMDSALS…NRCVSCLPGQ (161 aa). Position 1116 is a phosphotyrosine (Tyr1116). A Phosphothreonine modification is found at Thr1142. Phosphoserine occurs at positions 1201 and 1225. Positions 1207-1357 are helical bundle R6; that stretch reads RDVDNALRAV…QLITMCTQQA (151 aa). Phosphothreonine is present on Thr1263. Phosphoserine occurs at positions 1323 and 1328. The interaction with SYNM stretch occupies residues 1327 to 1948; it reads ASPNLKSQLA…CSPSDVYTKK (622 aa). The tract at residues 1358–1453 is helical bundle R7A; Interaction with KANK1; it reads PGQKECDNAL…AYLVGVSDPN (96 aa). The interval 1359–1659 is interaction with VCL and F-actin; sequence GQKECDNALR…SMRDKAPGQL (301 aa). A helical bundle R8 region spans residues 1461-1580; the sequence is LVEPTQFARA…NLSAFASNPE (120 aa). Lys1544 is modified (N6-acetyllysine). Residues 1581–1653 are helical bundle R7B; Interaction with KANK1; that stretch reads FSSVPAQISP…IKKLITSMRD (73 aa). The interval 1655-1822 is helical bundle R9; that stretch reads APGQLECETA…TLNEAASAAG (168 aa). Residues 1823-1973 are helical bundle R10; sequence VVGGMVDSIT…VLAALQAGNR (151 aa). Ser1849 bears the Phosphoserine mark. At Thr1855 the chain carries Phosphothreonine. Ser1878 carries the phosphoserine modification. Positions 1974 to 2140 are helical bundle R11; sequence GTQACITAAS…TVKAVEDEAT (167 aa). Lys2031 is subject to N6-acetyllysine. At Ser2040 the chain carries Phosphoserine. At Lys2115 the chain carries N6-acetyllysine. Residues 2141–2294 form a helical bundle R12 region; that stretch reads KGTRALEATT…QAAEAMKGTE (154 aa). Residues 2293 to 2533 enclose the I/LWEQ domain; that stretch reads TEWVDPEDPT…QIRQQQYKFL (241 aa). The segment at 2300–2482 is helical bundle R13; that stretch reads DPTVIAENEL…AAQKAAAFED (183 aa).

As to quaternary structure, part of a complex composed of THSD1, PTK2/FAK1, TLN1 and VCL. Interacts with THSD1; this promotes interaction with PTK2/FAK1 and VCL. Interacts with NRAP and LAYN. Interacts with SYNM. Interacts with ITGB1; the interaction is prevented by competitive binding of ITGB1BP1. Binds with high affinity to VCL and with low affinity to integrins. Interacts with APBB1IP; this inhibits VCL binding. Interacts with PTK2/FAK1. Interacts with PIP5K1C. Interacts with F-actin. Interacts with SVEP1. Interacts (via R7 domain) with KANK1 or KANK2 (via KN motif); this interaction likely initiates the assembly of cortical microtubule stabilization complexes (CMSCs) at the vicinity of focal adhesions.

The protein resides in the cell projection. It is found in the ruffle membrane. It localises to the cytoplasm. The protein localises to the cytoskeleton. Its subcellular location is the cell surface. The protein resides in the cell junction. It is found in the focal adhesion. Functionally, high molecular weight cytoskeletal protein concentrated at regions of cell-matrix and cell-cell contacts. Involved in connections of major cytoskeletal structures to the plasma membrane. With KANK1 co-organize the assembly of cortical microtubule stabilizing complexes (CMSCs) positioned to control microtubule-actin crosstalk at focal adhesions (FAs) rims. The chain is Talin-1 (Tln1) from Mus musculus (Mouse).